A 512-amino-acid chain; its full sequence is Glucose-1-phosphate adenylyltransferase small subunit 2, chloroplastic (512 aa).

The disordered stretch occupies residues 1–21; that stretch reads MAAIGVLKVPPSSSSSSSSSS. The N-terminal 63 residues, 1–63, are a transit peptide targeting the chloroplast; that stretch reads MAAIGVLKVP…RNPFIVSPKA (63 aa). Positions 12 to 21 are enriched in low complexity; sequence SSSSSSSSSS.

It belongs to the bacterial/plant glucose-1-phosphate adenylyltransferase family. In terms of assembly, heterotetramer. Leaves and seeds.

It is found in the plastid. Its subcellular location is the chloroplast. It carries out the reaction alpha-D-glucose 1-phosphate + ATP + H(+) = ADP-alpha-D-glucose + diphosphate. Its pathway is glycan biosynthesis; starch biosynthesis. Its activity is regulated as follows. Activated by 3'phosphoglycerate, inhibited by orthophosphate. Allosteric regulation. This protein plays a role in synthesis of starch. It catalyzes the synthesis of the activated glycosyl donor, ADP-glucose from Glc-1-P and ATP. This is Glucose-1-phosphate adenylyltransferase small subunit 2, chloroplastic (AGPP) from Vicia faba (Broad bean).